A 109-amino-acid chain; its full sequence is C-X-C motif chemokine 13 (109 aa).

An N-terminal signal peptide occupies residues M1 to G22. Intrachain disulfides connect C33/C60 and C35/C76.

Belongs to the intercrine alpha (chemokine CxC) family. As to expression, highest levels in liver, followed by spleen, lymph node, appendix and stomach. Low levels in salivary gland, mammary gland and fetal spleen.

The protein resides in the secreted. In terms of biological role, chemotactic for B-lymphocytes but not for T-lymphocytes, monocytes and neutrophils. Does not induce calcium release in B-lymphocytes. Binds to BLR1/CXCR5. The protein is C-X-C motif chemokine 13 (CXCL13) of Homo sapiens (Human).